The chain runs to 645 residues: 1,4-alpha-glucan branching enzyme GlgB (645 aa).

D309 acts as the Nucleophile in catalysis. E352 serves as the catalytic Proton donor. Positions 619 to 645 (VKTRKGSKKQDGSKTKVRSNVTSRGKR) are disordered. Over residues 636-645 (RSNVTSRGKR) the composition is skewed to polar residues.

The protein belongs to the glycosyl hydrolase 13 family. GlgB subfamily. Monomer.

It catalyses the reaction Transfers a segment of a (1-&gt;4)-alpha-D-glucan chain to a primary hydroxy group in a similar glucan chain.. It functions in the pathway glycan biosynthesis; glycogen biosynthesis. In terms of biological role, catalyzes the formation of the alpha-1,6-glucosidic linkages in glycogen by scission of a 1,4-alpha-linked oligosaccharide from growing alpha-1,4-glucan chains and the subsequent attachment of the oligosaccharide to the alpha-1,6 position. This Bacillus cereus (strain ATCC 14579 / DSM 31 / CCUG 7414 / JCM 2152 / NBRC 15305 / NCIMB 9373 / NCTC 2599 / NRRL B-3711) protein is 1,4-alpha-glucan branching enzyme GlgB.